The primary structure comprises 234 residues: Small ribosomal subunit protein uS2c (234 aa).

This sequence belongs to the universal ribosomal protein uS2 family.

The protein resides in the plastid. The protein localises to the chloroplast. In Pinus koraiensis (Korean pine), this protein is Small ribosomal subunit protein uS2c (rps2).